A 255-amino-acid chain; its full sequence is Diphthine synthase (255 aa).

S-adenosyl-L-methionine-binding positions include leucine 9, aspartate 85, valine 88, 113–114 (SI), leucine 164, alanine 207, and histidine 232.

This sequence belongs to the diphthine synthase family. As to quaternary structure, homodimer.

The enzyme catalyses 2-[(3S)-amino-3-carboxypropyl]-L-histidyl-[translation elongation factor 2] + 3 S-adenosyl-L-methionine = diphthine-[translation elongation factor 2] + 3 S-adenosyl-L-homocysteine + 3 H(+). It participates in protein modification; peptidyl-diphthamide biosynthesis. S-adenosyl-L-methionine-dependent methyltransferase that catalyzes the trimethylation of the amino group of the modified target histidine residue in translation elongation factor 2 (EF-2), to form an intermediate called diphthine. The three successive methylation reactions represent the second step of diphthamide biosynthesis. In Methanococcus maripaludis (strain DSM 14266 / JCM 13030 / NBRC 101832 / S2 / LL), this protein is Diphthine synthase.